The sequence spans 631 residues: ATP-dependent RNA helicase mrh4, mitochondrial (631 aa).

Residues 1–45 (MNRLGRLPLPLPPSVCLFCQSRATTPLPPSLQATRSMATARLRRR) constitute a mitochondrion transit peptide. Residues 68 to 111 (KERFGPFAGMNQTEARIRDKPRTRSRAAQKRSGEPEEDSQKESP) are disordered. A compositionally biased stretch (basic and acidic residues) spans 98 to 108 (RSGEPEEDSQK). The Q motif motif lies at 141 to 174 (TSFDQFQLLPVVRNSISSQALPGLVDVTPTPIQR). The span at 180-193 (LLEEPKTEKKPTKA) shows a compositional bias: basic and acidic residues. The disordered stretch occupies residues 180 to 199 (LLEEPKTEKKPTKADDDEPQ). Residues 194–406 (DDDEPQYDQY…RKRYPDIKRL (213 aa)) form the Helicase ATP-binding domain. 207–214 (AETGSGKT) is a binding site for ATP. Residues 229–249 (EARDKELEKKEQEEKAREREE) are disordered. Positions 353-356 (DEAD) match the DEAD box motif. The Helicase C-terminal domain maps to 455–631 (GPYASYVAPK…EGMFRGQALI (177 aa)).

Belongs to the DEAD box helicase family. MRH4 subfamily.

The protein resides in the mitochondrion. It carries out the reaction ATP + H2O = ADP + phosphate + H(+). ATP-binding RNA helicase involved in mitochondrial RNA metabolism. Required for maintenance of mitochondrial DNA. This is ATP-dependent RNA helicase mrh4, mitochondrial (mrh4) from Neosartorya fischeri (strain ATCC 1020 / DSM 3700 / CBS 544.65 / FGSC A1164 / JCM 1740 / NRRL 181 / WB 181) (Aspergillus fischerianus).